Reading from the N-terminus, the 488-residue chain is Homoserine O-acetyltransferase (488 aa).

The AB hydrolase-1 domain occupies 47–355 (NAILVCHALT…SYGHDAFLLE (309 aa)). The Nucleophile role is filled by Ser153. Residue Arg222 coordinates substrate. Active-site residues include Asp316 and His349. Substrate is bound at residue Asp350. CBS domains follow at residues 376–433 (MTEK…CSKL) and 437–488 (MTRD…RLIG).

This sequence belongs to the AB hydrolase superfamily. MetX family. As to quaternary structure, homodimer.

It localises to the cytoplasm. It catalyses the reaction L-homoserine + acetyl-CoA = O-acetyl-L-homoserine + CoA. It participates in amino-acid biosynthesis; L-methionine biosynthesis via de novo pathway; O-acetyl-L-homoserine from L-homoserine: step 1/1. Transfers an acetyl group from acetyl-CoA to L-homoserine, forming acetyl-L-homoserine. The protein is Homoserine O-acetyltransferase of Methanococcoides burtonii (strain DSM 6242 / NBRC 107633 / OCM 468 / ACE-M).